The sequence spans 635 residues: S-type anion channel SLAH3 (635 aa).

Residues 1–253 (MEEKPNYVIQ…IVLPNDKKWP (253 aa)) lie on the Cytoplasmic side of the membrane. Polar residues predominate over residues 102–121 (SDPTTSLSSENHKNSGSTGK). The disordered stretch occupies residues 102 to 173 (SDPTTSLSSE…SGHHQNQNQA (72 aa)). Residues 153–165 (NHHHHLHRQHQSG) are compositionally biased toward basic residues. Residue serine 189 is modified to Phosphoserine. Residues 193–217 (ERQFTRKPASVEPEAPNRNNQNLNT) form a disordered region. A helical membrane pass occupies residues 254–276 (FLLRYPISTFGMCLGVSSQAIMW). The Extracellular portion of the chain corresponds to 277-299 (KTLATAEPTKFLHVPLWINQGLW). The helical transmembrane segment at 300–320 (FISVALILTIATIYLLKIILF) threads the bilayer. The Cytoplasmic segment spans residues 321 to 335 (FEAVRREYYHPIRIN). The helical transmembrane segment at 336-356 (FFFAPFISLLFLALGVPPSII) threads the bilayer. Over 357–358 (TD) the chain is Extracellular. A helical transmembrane segment spans residues 359-379 (LPHFLWYLLMFPFICLELKIY). At 380–396 (GQWMSGGQRRLSRVANP) the chain is on the cytoplasmic side. A helical membrane pass occupies residues 397 to 417 (TNHLSVVGNFVGALLGASMGL). Residues 418–419 (RE) are Extracellular-facing. Residues 420–440 (GPIFFYAVGMAHYLVLFVTLY) traverse the membrane as a helical segment. Topologically, residues 441–455 (QRLPTNETLPKDLHP) are cytoplasmic. The chain crosses the membrane as a helical span at residues 456–476 (VFFLFVAAPSVASMAWAKVTG). Position 477 (serine 477) is a topological domain, extracellular. Residues 478-498 (FDYGSKVCYFIAIFLYFSLAV) traverse the membrane as a helical segment. Over 499-504 (RINFFR) the chain is Cytoplasmic. A helical transmembrane segment spans residues 505-525 (GIKFSLSWWAYTFPMTGAAIA). Residues 526–541 (TIRYATVVKSTMTQIM) are Extracellular-facing. The helical transmembrane segment at 542 to 562 (CVVLCAIATLVVFALLVTTII) threads the bilayer. Over 563-635 (HAFVLRDLFP…NGKTQESDSS (73 aa)) the chain is Cytoplasmic. The interval 611–635 (FTDSDSSQSNDVEACNGKTQESDSS) is disordered. The segment covering 614–635 (SDSSQSNDVEACNGKTQESDSS) has biased composition (polar residues).

It belongs to the SLAC1 S-type anion channel family. Homotrimer. Interacts with KAT1. Expressed in the whole plant, escpecially in vascular systems.

It localises to the cell membrane. Its function is as follows. Slow, weak voltage-dependent S-type anion efflux channel involved in maintenance of anion homeostasis. Binds to the highly selective inward-rectifying potassium channel KAT1 and inhibits its activity. Functions as an essential negative regulator of inward potassium channels in guard cells. Essential for the efficient stomatal closure and opening in guard cells. This Arabidopsis thaliana (Mouse-ear cress) protein is S-type anion channel SLAH3 (SLAH3).